Consider the following 116-residue polypeptide: Beta-2-microglobulin (116 aa).

The signal sequence occupies residues 1–19; it reads MRAIITFALFCVLYITVQA. The region spanning 24-111 is the Ig-like C1-type domain; it reads PKVQVYSHFP…RHMSNTNAYS (88 aa). Residues Cys-44 and Cys-99 are joined by a disulfide bond.

This sequence belongs to the beta-2-microglobulin family. In terms of assembly, heterodimer of an alpha chain and a beta chain. Beta-2-microglobulin is the beta-chain of major histocompatibility complex class I molecules.

The protein localises to the secreted. Functionally, component of the class I major histocompatibility complex (MHC). Involved in the presentation of peptide antigens to the immune system. The protein is Beta-2-microglobulin (b2m) of Labeobarbus intermedius (Lake tana barbels).